The primary structure comprises 199 residues: MAAQDNSDIEALIALMAKLPGLGPRSARRAVLHLIRKRALVLTPLADAMSRVAETARECLNCGNVGTSDICALCEDETRANGELCVVEDVADLWAMERAGVFKGRYHVLGGTLSALDAIGPEDLRIPRLVDRVSTEGVSEVILALNATIDGQTTAHYIADQLSGRVKLTSLAQGVPIGGELDYLDDGTISAALRARKEI.

Residues 59–74 (CLNCGNVGTSDICALC) form a C4-type zinc finger. One can recognise a Toprim domain in the interval 82–176 (GELCVVEDVA…KLTSLAQGVP (95 aa)).

It belongs to the RecR family.

Functionally, may play a role in DNA repair. It seems to be involved in an RecBC-independent recombinational process of DNA repair. It may act with RecF and RecO. The chain is Recombination protein RecR from Ruegeria sp. (strain TM1040) (Silicibacter sp.).